The chain runs to 1563 residues: DNA-directed RNA polymerase subunit beta' (1563 aa).

Cys61, Cys63, Cys76, and Cys79 together coordinate Zn(2+). Residues Asp588, Asp590, and Asp592 each coordinate Mg(2+). The Zn(2+) site is built by Cys925, Cys999, Cys1006, and Cys1009.

It belongs to the RNA polymerase beta' chain family. In terms of assembly, the RNAP catalytic core consists of 2 alpha, 1 beta, 1 beta' and 1 omega subunit. When a sigma factor is associated with the core the holoenzyme is formed, which can initiate transcription. Requires Mg(2+) as cofactor. Zn(2+) serves as cofactor.

The enzyme catalyses RNA(n) + a ribonucleoside 5'-triphosphate = RNA(n+1) + diphosphate. Its function is as follows. DNA-dependent RNA polymerase catalyzes the transcription of DNA into RNA using the four ribonucleoside triphosphates as substrates. In Hydrogenobaculum sp. (strain Y04AAS1), this protein is DNA-directed RNA polymerase subunit beta'.